The chain runs to 425 residues: Glutamyl-tRNA reductase (425 aa).

Substrate is bound by residues 47–50 (TCNR), serine 107, 112–114 (EDQ), and glutamine 118. Cysteine 48 functions as the Nucleophile in the catalytic mechanism. 187–192 (GAGHIA) contacts NADP(+).

Belongs to the glutamyl-tRNA reductase family. Homodimer.

It carries out the reaction (S)-4-amino-5-oxopentanoate + tRNA(Glu) + NADP(+) = L-glutamyl-tRNA(Glu) + NADPH + H(+). It functions in the pathway porphyrin-containing compound metabolism; protoporphyrin-IX biosynthesis; 5-aminolevulinate from L-glutamyl-tRNA(Glu): step 1/2. It participates in porphyrin-containing compound metabolism; chlorophyll biosynthesis. Its function is as follows. Catalyzes the NADPH-dependent reduction of glutamyl-tRNA(Glu) to glutamate 1-semialdehyde (GSA). This Roseiflexus sp. (strain RS-1) protein is Glutamyl-tRNA reductase.